The primary structure comprises 343 residues: Cyclin-Y-like protein 1-B (343 aa).

Residues M1–A69 are disordered. Residues A17–E28 are compositionally biased toward basic and acidic residues. Residues D145 to N267 enclose the Cyclin N-terminal domain.

The protein belongs to the cyclin family. Cyclin Y subfamily.

The sequence is that of Cyclin-Y-like protein 1-B (ccnyl1-b) from Xenopus laevis (African clawed frog).